The primary structure comprises 185 residues: Ribosome-recycling factor (185 aa).

It belongs to the RRF family.

It localises to the cytoplasm. Its function is as follows. Responsible for the release of ribosomes from messenger RNA at the termination of protein biosynthesis. May increase the efficiency of translation by recycling ribosomes from one round of translation to another. This Novosphingobium aromaticivorans (strain ATCC 700278 / DSM 12444 / CCUG 56034 / CIP 105152 / NBRC 16084 / F199) protein is Ribosome-recycling factor.